A 590-amino-acid chain; its full sequence is Hyaluronan synthase 1 (590 aa).

Residues 1–31 lie on the Cytoplasmic side of the membrane; the sequence is MKDKAAATMEIPEDPGIPKNLERKRPIVWRM. Residues 32 to 52 form a helical membrane-spanning segment; the sequence is IYYSFAVLLLAAFTAAYVTEF. At 53 to 60 the chain is on the extracellular side; that stretch reads QILTHEDV. The helical transmembrane segment at 61–81 threads the bilayer; that stretch reads LFSLGLYGLVMFLHLMMQSLF. The Cytoplasmic portion of the chain corresponds to 82 to 401; it reads AYLEIRRINK…YNAQWWYKHH (320 aa). The helical transmembrane segment at 402 to 422 threads the bilayer; it reads IWMTYESVVHFIFPFFITATV. The Extracellular segment spans residues 423-425; sequence IRL. Residues 426–446 form a helical membrane-spanning segment; it reads LYASTIWNVVWLLLCIQIMSV. The Cytoplasmic segment spans residues 447–456; that stretch reads LKSLYACWLR. The helical transmembrane segment at 457 to 477 threads the bilayer; that stretch reads GNPIMLLMSLYSMLYMTGLLP. At 478 to 505 the chain is on the extracellular side; it reads SKYFAMLTINKSGWGTSGRKKIVGNYMP. Residues 506 to 526 form a helical membrane-spanning segment; sequence VLPLSIWMAVLCGGVGYSIYM. Residues 527-543 are Cytoplasmic-facing; the sequence is DCHQDWSTPEKQKELYH. Residues 544-564 form a helical membrane-spanning segment; the sequence is LLYGCISYTLYWVLMALMYWV. Over 565–588 the chain is Extracellular; that stretch reads WVKRCCRKRSQTVTLVHDIPERLV.

It belongs to the NodC/HAS family. Requires Mg(2+) as cofactor.

The protein localises to the membrane. The enzyme catalyses [hyaluronan](n) + UDP-N-acetyl-alpha-D-glucosamine = N-acetyl-beta-D-glucosaminyl-(1-&gt;4)-[hyaluronan](n) + UDP + H(+). It carries out the reaction N-acetyl-beta-D-glucosaminyl-(1-&gt;4)-[hyaluronan](n) + UDP-alpha-D-glucuronate = [hyaluronan](n+1) + UDP + H(+). The protein operates within glycan biosynthesis; hyaluronan biosynthesis. In terms of biological role, catalyzes the addition of GlcNAc or GlcUA monosaccharides to the nascent hyaluronan polymer. Therefore, it is essential to hyaluronan synthesis a major component of most extracellular matrices that has a structural role in tissues architectures and regulates cell adhesion, migration and differentiation. Also able to catalyze the synthesis of chito-oligosaccharide depending on the substrate. The sequence is that of Hyaluronan synthase 1 (has1) from Xenopus tropicalis (Western clawed frog).